A 137-amino-acid polypeptide reads, in one-letter code: MSKTFIMIKPDGVKNKHVGNILARIEKEGFKILGLKYLKLSLEDAKQFYKVHSARPFYSDLCNYMSSGPIVAAALERDNAVLHWREVIGATDPKEAAAGTIRALYAESKEANAVHGSDSDENAALEVSFFFKGNELF.

6 residues coordinate ATP: lysine 9, phenylalanine 57, arginine 85, threonine 91, arginine 102, and asparagine 112. Histidine 115 functions as the Pros-phosphohistidine intermediate in the catalytic mechanism.

This sequence belongs to the NDK family. In terms of assembly, homotetramer. The cofactor is Mg(2+).

The protein resides in the cytoplasm. The catalysed reaction is a 2'-deoxyribonucleoside 5'-diphosphate + ATP = a 2'-deoxyribonucleoside 5'-triphosphate + ADP. It catalyses the reaction a ribonucleoside 5'-diphosphate + ATP = a ribonucleoside 5'-triphosphate + ADP. Functionally, major role in the synthesis of nucleoside triphosphates other than ATP. The ATP gamma phosphate is transferred to the NDP beta phosphate via a ping-pong mechanism, using a phosphorylated active-site intermediate. In Leptospira borgpetersenii serovar Hardjo-bovis (strain L550), this protein is Nucleoside diphosphate kinase.